Here is a 150-residue protein sequence, read N- to C-terminus: MRLVIQRVSKAAVHIGGVCAGAVGPGLLILAGIEEADTEEDVRWLANKAAAMRIFSDADGKMNLSVREVSGSVLVVSQFTLHASTRKGNRPSFIRAARPERAIPLYELFKKELASLLEGRVESGEFGADMQVSLINDGPVTIFMDSRKRE.

The Gly-cisPro motif, important for rejection of L-amino acids motif lies at Gly-138–Pro-139.

Belongs to the DTD family. Homodimer.

Its subcellular location is the cytoplasm. It catalyses the reaction glycyl-tRNA(Ala) + H2O = tRNA(Ala) + glycine + H(+). It carries out the reaction a D-aminoacyl-tRNA + H2O = a tRNA + a D-alpha-amino acid + H(+). Functionally, an aminoacyl-tRNA editing enzyme that deacylates mischarged D-aminoacyl-tRNAs. Also deacylates mischarged glycyl-tRNA(Ala), protecting cells against glycine mischarging by AlaRS. Acts via tRNA-based rather than protein-based catalysis; rejects L-amino acids rather than detecting D-amino acids in the active site. By recycling D-aminoacyl-tRNA to D-amino acids and free tRNA molecules, this enzyme counteracts the toxicity associated with the formation of D-aminoacyl-tRNA entities in vivo and helps enforce protein L-homochirality. This Akkermansia muciniphila (strain ATCC BAA-835 / DSM 22959 / JCM 33894 / BCRC 81048 / CCUG 64013 / CIP 107961 / Muc) protein is D-aminoacyl-tRNA deacylase.